A 235-amino-acid polypeptide reads, in one-letter code: Vinculin (235 aa).

Belongs to the vinculin/alpha-catenin family. Exhibits self-association properties. In terms of processing, phosphorylated on serines, threonines and tyrosines. Acetylated by myristic acid and/or palmitic acid.

The protein localises to the cell membrane. The protein resides in the cell junction. It localises to the adherens junction. It is found in the focal adhesion. Its subcellular location is the cytoplasm. The protein localises to the cytoskeleton. The protein resides in the sarcolemma. It localises to the cell projection. It is found in the podosome. Functionally, involved in cell adhesion. May be involved in the attachment of the actin-based microfilaments to the plasma membrane. This is Vinculin (vcl) from Xenopus laevis (African clawed frog).